The following is a 192-amino-acid chain: Xanthine phosphoribosyltransferase (192 aa).

Xanthine-binding residues include Leu-20 and Thr-26. A 5-phospho-alpha-D-ribose 1-diphosphate-binding site is contributed by 127–131; it reads ANGQA. Lys-155 serves as a coordination point for xanthine.

It belongs to the purine/pyrimidine phosphoribosyltransferase family. Xpt subfamily. Homodimer.

The protein resides in the cytoplasm. It carries out the reaction XMP + diphosphate = xanthine + 5-phospho-alpha-D-ribose 1-diphosphate. It functions in the pathway purine metabolism; XMP biosynthesis via salvage pathway; XMP from xanthine: step 1/1. In terms of biological role, converts the preformed base xanthine, a product of nucleic acid breakdown, to xanthosine 5'-monophosphate (XMP), so it can be reused for RNA or DNA synthesis. The polypeptide is Xanthine phosphoribosyltransferase (Streptococcus thermophilus).